The sequence spans 755 residues: Polyribonucleotide nucleotidyltransferase (755 aa).

Residues Asp482 and Asp488 each coordinate Mg(2+). The KH domain occupies 549 to 608; the sequence is PRMVSFYIDKDKISAAIGAKGKNIRSVCERSNAKIEIGDDGKVSVFAMSSAEAEIAKNMM. The S1 motif domain occupies 618–686; it reads GAIVDVKVVK…KGGCPKLSRR (69 aa). Over residues 702-714 the composition is skewed to basic and acidic residues; it reads NEEKKDSSNDRDY. The segment at 702-755 is disordered; it reads NEEKKDSSNDRDYYNSPFNRKSGHRKRPVHSRSSFSNRNNRPKFGNDDSSSSFY. A compositionally biased stretch (basic residues) spans 722–731; sequence KSGHRKRPVH.

Belongs to the polyribonucleotide nucleotidyltransferase family. Requires Mg(2+) as cofactor.

The protein resides in the cytoplasm. The enzyme catalyses RNA(n+1) + phosphate = RNA(n) + a ribonucleoside 5'-diphosphate. Its function is as follows. Involved in mRNA degradation. Catalyzes the phosphorolysis of single-stranded polyribonucleotides processively in the 3'- to 5'-direction. The polypeptide is Polyribonucleotide nucleotidyltransferase (Wolbachia sp. subsp. Brugia malayi (strain TRS)).